Consider the following 110-residue polypeptide: FGSGGVFRITMQNLNDRLASYLDKVRALEQANGELEVKIRDWYQKIVLQIDNARTKFETEQALRVLDELTLARKNHEEEISALRADTERQNQEYQQLMDIKLEQEIATYR.

The head stretch occupies residues 1–8 (FGSGGVFR). S3 is modified (phosphoserine). In terms of domain architecture, IF rod spans 7–110 (FRITMQNLND…KLEQEIATYR (104 aa)). R8 is modified (omega-N-methylarginine). Residues 9–42 (ITMQNLNDRLASYLDKVRALEQANGELEVKIRDW) form a coil 1A region. Residues 43–45 (YQK) are linker 1. The segment at 46-83 (IVLQIDNARTKFETEQALRVLDELTLARKNHEEEISAL) is coil 1B. The tract at residues 85–110 (ADTERQNQEYQQLMDIKLEQEIATYR) is coil 2. The tract at residues 85–110 (ADTERQNQEYQQLMDIKLEQEIATYR) is necessary for interaction with PNN.

This sequence belongs to the intermediate filament family. As to quaternary structure, heterotetramer of two type I and two type II keratins. Interacts with PNN and the actin-binding domain of DMD.

In terms of biological role, involved in the organization of myofibers. Together with KRT8, helps to link the contractile apparatus to dystrophin at the costameres of striated muscle. The sequence is that of Keratin, type I cytoskeletal 19 from Mesocricetus auratus (Golden hamster).